The sequence spans 63 residues: Kappa-theraphotoxin-Cg3a 1 (63 aa).

A signal peptide spans 1–21; sequence MKNTSILFILGLALLLVLAFE. Positions 22-29 are excised as a propeptide; sequence VQVGESDG. 3 disulfides stabilise this stretch: cysteine 31/cysteine 46, cysteine 38/cysteine 51, and cysteine 45/cysteine 58.

Belongs to the neurotoxin 10 (Hwtx-1) family. 44 (Jztx-4) subfamily. As to expression, expressed by the venom gland.

It is found in the secreted. Its function is as follows. Gating modifier of Kv2.1/KCNB1, Kv2.2/KCNB2 and Kv4.3/KCND3 channels. This chain is Kappa-theraphotoxin-Cg3a 1, found in Chilobrachys guangxiensis (Chinese earth tiger tarantula).